A 444-amino-acid chain; its full sequence is Putative F-box protein At1g64540 (444 aa).

One can recognise an F-box domain in the interval 4–50 (REFISNLPDEILGKILSLLPTKLGVSTSVLSKRWRNLILLVDNFDLE).

This is Putative F-box protein At1g64540 from Arabidopsis thaliana (Mouse-ear cress).